The chain runs to 740 residues: Phosphoribosylformylglycinamidine synthase subunit PurL (740 aa).

The active site involves His55. ATP contacts are provided by Tyr58 and Lys97. Glu99 contacts Mg(2+). Substrate contacts are provided by residues 100-103 and Arg122; that span reads SHNH. Catalysis depends on His101, which acts as the Proton acceptor. Asp123 lines the Mg(2+) pocket. Gln246 is a binding site for substrate. Asp276 provides a ligand contact to Mg(2+). 320-322 provides a ligand contact to substrate; it reads ESQ. 2 residues coordinate ATP: Asp501 and Gly538. Position 539 (Asn539) interacts with Mg(2+). Ser541 contributes to the substrate binding site.

Belongs to the FGAMS family. In terms of assembly, monomer. Part of the FGAM synthase complex composed of 1 PurL, 1 PurQ and 2 PurS subunits.

It is found in the cytoplasm. It catalyses the reaction N(2)-formyl-N(1)-(5-phospho-beta-D-ribosyl)glycinamide + L-glutamine + ATP + H2O = 2-formamido-N(1)-(5-O-phospho-beta-D-ribosyl)acetamidine + L-glutamate + ADP + phosphate + H(+). The protein operates within purine metabolism; IMP biosynthesis via de novo pathway; 5-amino-1-(5-phospho-D-ribosyl)imidazole from N(2)-formyl-N(1)-(5-phospho-D-ribosyl)glycinamide: step 1/2. Functionally, part of the phosphoribosylformylglycinamidine synthase complex involved in the purines biosynthetic pathway. Catalyzes the ATP-dependent conversion of formylglycinamide ribonucleotide (FGAR) and glutamine to yield formylglycinamidine ribonucleotide (FGAM) and glutamate. The FGAM synthase complex is composed of three subunits. PurQ produces an ammonia molecule by converting glutamine to glutamate. PurL transfers the ammonia molecule to FGAR to form FGAM in an ATP-dependent manner. PurS interacts with PurQ and PurL and is thought to assist in the transfer of the ammonia molecule from PurQ to PurL. The protein is Phosphoribosylformylglycinamidine synthase subunit PurL of Lacticaseibacillus casei (Lactobacillus casei).